We begin with the raw amino-acid sequence, 156 residues long: Small ribosomal subunit protein uS7 (156 aa).

Belongs to the universal ribosomal protein uS7 family. In terms of assembly, part of the 30S ribosomal subunit. Contacts proteins S9 and S11.

One of the primary rRNA binding proteins, it binds directly to 16S rRNA where it nucleates assembly of the head domain of the 30S subunit. Is located at the subunit interface close to the decoding center, probably blocks exit of the E-site tRNA. This Brucella anthropi (strain ATCC 49188 / DSM 6882 / CCUG 24695 / JCM 21032 / LMG 3331 / NBRC 15819 / NCTC 12168 / Alc 37) (Ochrobactrum anthropi) protein is Small ribosomal subunit protein uS7.